Reading from the N-terminus, the 61-residue chain is Small ribosomal subunit protein uS14 (61 aa).

Cys24, Cys27, Cys40, and Cys43 together coordinate Zn(2+).

It belongs to the universal ribosomal protein uS14 family. Zinc-binding uS14 subfamily. As to quaternary structure, part of the 30S ribosomal subunit. Contacts proteins S3 and S10. It depends on Zn(2+) as a cofactor.

In terms of biological role, binds 16S rRNA, required for the assembly of 30S particles and may also be responsible for determining the conformation of the 16S rRNA at the A site. This Borrelia hermsii (strain HS1 / DAH) protein is Small ribosomal subunit protein uS14.